Here is a 304-residue protein sequence, read N- to C-terminus: Aspartate carbamoyltransferase catalytic subunit (304 aa).

Arg53 and Thr54 together coordinate carbamoyl phosphate. Lys82 is a binding site for L-aspartate. Positions 103, 131, and 134 each coordinate carbamoyl phosphate. Residues Arg163 and Arg224 each contribute to the L-aspartate site. Carbamoyl phosphate is bound by residues Leu263 and Pro264.

It belongs to the aspartate/ornithine carbamoyltransferase superfamily. ATCase family. In terms of assembly, heterooligomer of catalytic and regulatory chains.

It catalyses the reaction carbamoyl phosphate + L-aspartate = N-carbamoyl-L-aspartate + phosphate + H(+). It functions in the pathway pyrimidine metabolism; UMP biosynthesis via de novo pathway; (S)-dihydroorotate from bicarbonate: step 2/3. In terms of biological role, catalyzes the condensation of carbamoyl phosphate and aspartate to form carbamoyl aspartate and inorganic phosphate, the committed step in the de novo pyrimidine nucleotide biosynthesis pathway. The polypeptide is Aspartate carbamoyltransferase catalytic subunit (Haloarcula marismortui (strain ATCC 43049 / DSM 3752 / JCM 8966 / VKM B-1809) (Halobacterium marismortui)).